The primary structure comprises 113 residues: Phosphorelay protein LuxU (113 aa).

The 96-residue stretch at 18-113 (GEENVPILVN…THQCYSDLVH (96 aa)) folds into the HPt domain. Histidine 57 carries the phosphohistidine modification.

As to quaternary structure, monomer.

Its function is as follows. Phosphorelay protein which receives sensory signals from a sensory kinase and transmit them to LuxO. At low cell density, a phosphoryl group is transferred from the sensory kinase, probably on His-57 and this phosphoryl group is further transferred to LuxO. The protein is Phosphorelay protein LuxU (luxU) of Vibrio cholerae serotype O1 (strain ATCC 39315 / El Tor Inaba N16961).